A 182-amino-acid chain; its full sequence is Orotate phosphoribosyltransferase (182 aa).

Residues arginine 91, lysine 92, lysine 95, histidine 97, and 117-125 contribute to the 5-phospho-alpha-D-ribose 1-diphosphate site; that span reads EDVTTTGGS. Residues threonine 121 and arginine 149 each coordinate orotate.

Belongs to the purine/pyrimidine phosphoribosyltransferase family. PyrE subfamily. In terms of assembly, homodimer. The cofactor is Mg(2+).

The enzyme catalyses orotidine 5'-phosphate + diphosphate = orotate + 5-phospho-alpha-D-ribose 1-diphosphate. It functions in the pathway pyrimidine metabolism; UMP biosynthesis via de novo pathway; UMP from orotate: step 1/2. In terms of biological role, catalyzes the transfer of a ribosyl phosphate group from 5-phosphoribose 1-diphosphate to orotate, leading to the formation of orotidine monophosphate (OMP). This is Orotate phosphoribosyltransferase from Pyrococcus furiosus (strain ATCC 43587 / DSM 3638 / JCM 8422 / Vc1).